We begin with the raw amino-acid sequence, 122 residues long: Large ribosomal subunit protein uL14 (122 aa).

Belongs to the universal ribosomal protein uL14 family. Part of the 50S ribosomal subunit. Forms a cluster with proteins L3 and L19. In the 70S ribosome, L14 and L19 interact and together make contacts with the 16S rRNA in bridges B5 and B8.

In terms of biological role, binds to 23S rRNA. Forms part of two intersubunit bridges in the 70S ribosome. The protein is Large ribosomal subunit protein uL14 of Aliarcobacter butzleri (strain RM4018) (Arcobacter butzleri).